Consider the following 429-residue polypeptide: Glutamyl-tRNA reductase (429 aa).

Substrate-binding positions include 50-53, serine 110, 115-117, and glutamine 121; these read TCNR and ETQ. Cysteine 51 serves as the catalytic Nucleophile. Residue 190-195 coordinates NADP(+); sequence GAGEMA.

It belongs to the glutamyl-tRNA reductase family. Homodimer.

It carries out the reaction (S)-4-amino-5-oxopentanoate + tRNA(Glu) + NADP(+) = L-glutamyl-tRNA(Glu) + NADPH + H(+). The protein operates within porphyrin-containing compound metabolism; protoporphyrin-IX biosynthesis; 5-aminolevulinate from L-glutamyl-tRNA(Glu): step 1/2. Functionally, catalyzes the NADPH-dependent reduction of glutamyl-tRNA(Glu) to glutamate 1-semialdehyde (GSA). The polypeptide is Glutamyl-tRNA reductase (Campylobacter hominis (strain ATCC BAA-381 / DSM 21671 / CCUG 45161 / LMG 19568 / NCTC 13146 / CH001A)).